A 269-amino-acid polypeptide reads, in one-letter code: Adenosylcobinamide-GDP ribazoletransferase (269 aa).

A run of 5 helical transmembrane segments spans residues 8–28, 41–61, 70–90, 114–136, and 196–216; these read QFNLILLAVSFFTRLPVPTAI, YFPLVGWLLAALLSAFYCFML, VCLLIIFSLMLTGAIHEDGLA, IGTYGTCALICALLSKFILLSSL, and VPAVLWLPLSSAILVIVSACV.

This sequence belongs to the CobS family. Requires Mg(2+) as cofactor.

It localises to the cell inner membrane. The catalysed reaction is alpha-ribazole + adenosylcob(III)inamide-GDP = adenosylcob(III)alamin + GMP + H(+). It carries out the reaction alpha-ribazole 5'-phosphate + adenosylcob(III)inamide-GDP = adenosylcob(III)alamin 5'-phosphate + GMP + H(+). It functions in the pathway cofactor biosynthesis; adenosylcobalamin biosynthesis; adenosylcobalamin from cob(II)yrinate a,c-diamide: step 7/7. Its function is as follows. Joins adenosylcobinamide-GDP and alpha-ribazole to generate adenosylcobalamin (Ado-cobalamin). Also synthesizes adenosylcobalamin 5'-phosphate from adenosylcobinamide-GDP and alpha-ribazole 5'-phosphate. This Pseudoalteromonas atlantica (strain T6c / ATCC BAA-1087) protein is Adenosylcobinamide-GDP ribazoletransferase.